The following is a 141-amino-acid chain: MARFLQTLLFLVIMVEFVSRRVEAWGSPQIVRPFEDIPKSYVYVQHALWYAMKEYNKASNDLYNFRVVDILKSQEQITDSLEYYLEVNIARTMCKKIAGDNENCLFQQDPKMKKMVFCIFIVSSKPWKFELKMLKKQCKDI.

Positions 1–24 are cleaved as a signal peptide; that stretch reads MARFLQTLLFLVIMVEFVSRRVEA. The tract at residues 76–80 is secondary area of contact; the sequence is QITDS. 2 cysteine pairs are disulfide-bonded: Cys-94/Cys-104 and Cys-118/Cys-138.

It belongs to the cystatin family. In terms of tissue distribution, expressed exclusively in testis. Found in spermatagonia, spermatocytes, round spermatids, elongating spermatids and spermatozoa.

The protein localises to the secreted. It is found in the cytoplasm. Functionally, may perform a specialized role during sperm development and maturation. This is Cystatin-13 from Mus musculus (Mouse).